A 211-amino-acid chain; its full sequence is Protein-L-isoaspartate O-methyltransferase (211 aa).

Residue S62 is part of the active site.

It belongs to the methyltransferase superfamily. L-isoaspartyl/D-aspartyl protein methyltransferase family.

It is found in the cytoplasm. It catalyses the reaction [protein]-L-isoaspartate + S-adenosyl-L-methionine = [protein]-L-isoaspartate alpha-methyl ester + S-adenosyl-L-homocysteine. Catalyzes the methyl esterification of L-isoaspartyl residues in peptides and proteins that result from spontaneous decomposition of normal L-aspartyl and L-asparaginyl residues. It plays a role in the repair and/or degradation of damaged proteins. This Shewanella woodyi (strain ATCC 51908 / MS32) protein is Protein-L-isoaspartate O-methyltransferase.